Reading from the N-terminus, the 136-residue chain is MTRPTSSAPSQRMLRVGEQVRAAITQVLQRGEVRDDIIEATVISISEVRMSPDLKIATAYVTPLGVSDHSIVIEALNRHAKFIRGRLGPQLRQMKYMPEVRFRDDTSFDNYKKIDELLRSPEVSRDLDSDSDSDEK.

The protein belongs to the RbfA family. In terms of assembly, monomer. Binds 30S ribosomal subunits, but not 50S ribosomal subunits or 70S ribosomes.

It is found in the cytoplasm. Functionally, one of several proteins that assist in the late maturation steps of the functional core of the 30S ribosomal subunit. Associates with free 30S ribosomal subunits (but not with 30S subunits that are part of 70S ribosomes or polysomes). Required for efficient processing of 16S rRNA. May interact with the 5'-terminal helix region of 16S rRNA. This Rhizobium etli (strain ATCC 51251 / DSM 11541 / JCM 21823 / NBRC 15573 / CFN 42) protein is Ribosome-binding factor A.